The sequence spans 290 residues: Elongation factor Ts (290 aa).

The segment at 81 to 84 (TDFV) is involved in Mg(2+) ion dislocation from EF-Tu.

This sequence belongs to the EF-Ts family.

It is found in the cytoplasm. Functionally, associates with the EF-Tu.GDP complex and induces the exchange of GDP to GTP. It remains bound to the aminoacyl-tRNA.EF-Tu.GTP complex up to the GTP hydrolysis stage on the ribosome. The protein is Elongation factor Ts of Saccharophagus degradans (strain 2-40 / ATCC 43961 / DSM 17024).